A 156-amino-acid chain; its full sequence is Arginine repressor (156 aa).

This sequence belongs to the ArgR family.

The protein localises to the cytoplasm. It functions in the pathway amino-acid biosynthesis; L-arginine biosynthesis [regulation]. In terms of biological role, regulates arginine biosynthesis genes. This is Arginine repressor from Vibrio vulnificus (strain CMCP6).